The chain runs to 167 residues: NADH-ubiquinone oxidoreductase chain 6 (167 aa).

Helical transmembrane passes span 1 to 21 (MKMM…VAFA), 27 to 47 (VYGG…VVSL), 50 to 70 (VFLG…VFGY), 88 to 108 (VALS…LMSG), and 143 to 163 (WALV…LEVV).

It belongs to the complex I subunit 6 family. Core subunit of respiratory chain NADH dehydrogenase (Complex I) which is composed of 45 different subunits.

The protein resides in the mitochondrion inner membrane. The catalysed reaction is a ubiquinone + NADH + 5 H(+)(in) = a ubiquinol + NAD(+) + 4 H(+)(out). Its function is as follows. Core subunit of the mitochondrial membrane respiratory chain NADH dehydrogenase (Complex I) which catalyzes electron transfer from NADH through the respiratory chain, using ubiquinone as an electron acceptor. Essential for the catalytic activity and assembly of complex I. This Osphranter robustus (Wallaroo) protein is NADH-ubiquinone oxidoreductase chain 6 (MT-ND6).